We begin with the raw amino-acid sequence, 312 residues long: Putative clathrin assembly protein At2g01920 (312 aa).

Residues 21–152 (LITATDEKFT…ILYYNKNMIR (132 aa)) form the ENTH domain.

It localises to the membrane. It is found in the clathrin-coated pit. The protein localises to the golgi apparatus. Its subcellular location is the cytoplasmic vesicle. The protein resides in the clathrin-coated vesicle. The protein is Putative clathrin assembly protein At2g01920 of Arabidopsis thaliana (Mouse-ear cress).